The chain runs to 452 residues: Tubulin beta-2 chain (452 aa).

8 residues coordinate GTP: Q11, E74, S143, V147, T148, G149, N209, and N231. E74 contacts Mg(2+). The tract at residues 431–452 (QEATADDEAEFEEEGEVEGEYD) is disordered. Over residues 434 to 452 (TADDEAEFEEEGEVEGEYD) the composition is skewed to acidic residues.

This sequence belongs to the tubulin family. In terms of assembly, dimer of alpha and beta chains. A typical microtubule is a hollow water-filled tube with an outer diameter of 25 nm and an inner diameter of 15 nM. Alpha-beta heterodimers associate head-to-tail to form protofilaments running lengthwise along the microtubule wall with the beta-tubulin subunit facing the microtubule plus end conferring a structural polarity. Microtubules usually have 13 protofilaments but different protofilament numbers can be found in some organisms and specialized cells. Mg(2+) is required as a cofactor.

It localises to the cytoplasm. It is found in the cytoskeleton. In terms of biological role, tubulin is the major constituent of microtubules, a cylinder consisting of laterally associated linear protofilaments composed of alpha- and beta-tubulin heterodimers. Microtubules grow by the addition of GTP-tubulin dimers to the microtubule end, where a stabilizing cap forms. Below the cap, tubulin dimers are in GDP-bound state, owing to GTPase activity of alpha-tubulin. This is Tubulin beta-2 chain from Homarus americanus (American lobster).